The following is a 524-amino-acid chain: Peptide chain release factor 3 (524 aa).

Positions 9–275 (SRRRTFAIIS…AVVDLSPPPI (267 aa)) constitute a tr-type G domain. Residues 18 to 25 (SHPDAGKT), 86 to 90 (DTPGH), and 140 to 143 (NKLD) contribute to the GTP site.

The protein belongs to the TRAFAC class translation factor GTPase superfamily. Classic translation factor GTPase family. PrfC subfamily.

The protein localises to the cytoplasm. Its function is as follows. Increases the formation of ribosomal termination complexes and stimulates activities of RF-1 and RF-2. It binds guanine nucleotides and has strong preference for UGA stop codons. It may interact directly with the ribosome. The stimulation of RF-1 and RF-2 is significantly reduced by GTP and GDP, but not by GMP. The protein is Peptide chain release factor 3 of Dechloromonas aromatica (strain RCB).